Consider the following 382-residue polypeptide: Ribosomal RNA large subunit methyltransferase G (382 aa).

It belongs to the methyltransferase superfamily. RlmG family.

The protein resides in the cytoplasm. The catalysed reaction is guanosine(1835) in 23S rRNA + S-adenosyl-L-methionine = N(2)-methylguanosine(1835) in 23S rRNA + S-adenosyl-L-homocysteine + H(+). In terms of biological role, specifically methylates the guanine in position 1835 (m2G1835) of 23S rRNA. The sequence is that of Ribosomal RNA large subunit methyltransferase G from Aliivibrio fischeri (strain ATCC 700601 / ES114) (Vibrio fischeri).